A 215-amino-acid polypeptide reads, in one-letter code: 3,4-dihydroxy-2-butanone 4-phosphate synthase (215 aa).

Residues 38–39, D43, 151–155, and E175 each bind D-ribulose 5-phosphate; these read RE and RRGHT. Position 39 (E39) interacts with Mg(2+). H154 serves as a coordination point for Mg(2+).

This sequence belongs to the DHBP synthase family. In terms of assembly, homodimer. Requires Mg(2+) as cofactor. Mn(2+) is required as a cofactor.

The enzyme catalyses D-ribulose 5-phosphate = (2S)-2-hydroxy-3-oxobutyl phosphate + formate + H(+). The protein operates within cofactor biosynthesis; riboflavin biosynthesis; 2-hydroxy-3-oxobutyl phosphate from D-ribulose 5-phosphate: step 1/1. In terms of biological role, catalyzes the conversion of D-ribulose 5-phosphate to formate and 3,4-dihydroxy-2-butanone 4-phosphate. The polypeptide is 3,4-dihydroxy-2-butanone 4-phosphate synthase (Haemophilus influenzae (strain ATCC 51907 / DSM 11121 / KW20 / Rd)).